A 259-amino-acid chain; its full sequence is Undecaprenyl-diphosphatase 4 (259 aa).

A run of 8 helical transmembrane segments spans residues 1–21 (MNWLEAFILGIIQGLTEFLPI), 39–59 (AGLFLDTMLHIGTLLAVFIYY), 71–91 (FSKLMLLLIVGTIPAVVIGLL), 99–119 (ISKTGITIGWEFLVTGFFLYV), 133–153 (ITYKDAFIIGSFQAAAIFPAI), 173–193 (AAYFSFLLSTPAIVGAIILQF), 208–228 (SLIVGTLSAAFFGYIAVSWMI), and 239–259 (FAYYVWGLGILILTLQFTDVF).

The protein belongs to the UppP family.

The protein localises to the cell membrane. It carries out the reaction di-trans,octa-cis-undecaprenyl diphosphate + H2O = di-trans,octa-cis-undecaprenyl phosphate + phosphate + H(+). In terms of biological role, catalyzes the dephosphorylation of undecaprenyl diphosphate (UPP). Confers resistance to bacitracin. In Bacillus thuringiensis subsp. konkukian (strain 97-27), this protein is Undecaprenyl-diphosphatase 4.